A 270-amino-acid chain; its full sequence is MENIGRQRPIGVFDSGIGGLTNVRALMERLPMENIIYFGDTARVPYGTKSKATIENFSMQIVDFLLGHDVKAMVIACNTIAAVAGRKIRQKTGNMPVLDVISAGAKAALATTRNNKIGIIATNTTVNSNAYARAIHRDNPDTLVRTQAAPLLVPLVEEGWLEHEVTRLTVCEYLKPLLADGIDTLVLGCTHFPLLKPLIGREAHNVALVDSAITTAEETARVLAQEGLLDTGNNNPDYRFYVSDIPLKFRTIGERFLGRTMEQIEMVSLG.

Substrate contacts are provided by residues 14–15 and 46–47; these read DS and YG. Cys77 (proton donor/acceptor) is an active-site residue. A substrate-binding site is contributed by 78 to 79; it reads NT. Cys189 functions as the Proton donor/acceptor in the catalytic mechanism. 190–191 contacts substrate; that stretch reads TH.

This sequence belongs to the aspartate/glutamate racemases family.

It catalyses the reaction L-glutamate = D-glutamate. Its pathway is cell wall biogenesis; peptidoglycan biosynthesis. Functionally, provides the (R)-glutamate required for cell wall biosynthesis. This chain is Glutamate racemase, found in Neisseria gonorrhoeae (strain ATCC 700825 / FA 1090).